The primary structure comprises 82 residues: Cobrotoxin-b (82 aa).

The first 21 residues, 1 to 21 (MKTLLLTLLVVTIVCLDLGYT), serve as a signal peptide directing secretion. 4 cysteine pairs are disulfide-bonded: Cys-24–Cys-44, Cys-38–Cys-61, Cys-63–Cys-74, and Cys-75–Cys-80.

The protein belongs to the three-finger toxin family. Short-chain subfamily. Type I alpha-neurotoxin sub-subfamily. In terms of tissue distribution, expressed by the venom gland.

It is found in the secreted. Binds to muscle nicotinic acetylcholine receptor (nAChR) and inhibit acetylcholine from binding to the receptor, thereby impairing neuromuscular transmission. Produces peripheral paralysis by blocking neuromuscular transmission at the postsynaptic site. Has a lower toxicity than cobrotoxin. The protein is Cobrotoxin-b of Naja atra (Chinese cobra).